We begin with the raw amino-acid sequence, 666 residues long: uncharacterized protein (666 aa).

This is an uncharacterized protein from Invertebrate iridescent virus 6 (IIV-6).